We begin with the raw amino-acid sequence, 280 residues long: Myelin proteolipid protein B (280 aa).

Residues 1 to 10 lie on the Cytoplasmic side of the membrane; sequence MGWHDGCIRC. Residues Cys7 and Cys10 are each lipidated (S-palmitoyl cysteine). A helical membrane pass occupies residues 11 to 36; it reads MVGVPFASVIATVLCFAGVALFCGCG. Residues 37–59 lie on the Extracellular side of the membrane; the sequence is HEALSGTEKLIETYFSKNYQEYE. The chain crosses the membrane as a helical span at residues 60–88; sequence YLIHVINAFQYVIYGIAIFFFLYGILLLA. Residues 89–152 are Cytoplasmic-facing; the sequence is EGFYTTTAIK…LGKWLGHPDK (64 aa). Residues Cys140 and Cys142 are each lipidated (S-palmitoyl cysteine). A helical transmembrane segment spans residues 153–179; the sequence is FVGVTYVITILWILIFACSAVPVYIYF. Residues 180–239 lie on the Extracellular side of the membrane; that stretch reads NTWVTCQSIAFPGKTTTSVSTLCLDARMYGVLPWNAFPGKVCGTSLLAICKTSEFQMTFH. 2 disulfides stabilise this stretch: Cys185–Cys229 and Cys202–Cys221. The helical transmembrane segment at 240-269 threads the bilayer; it reads LFIAAFVGAAATLVALLTYMVGASFNYAVL. Residues 270-280 lie on the Cytoplasmic side of the membrane; that stretch reads RVTGRSDRSKF.

Belongs to the myelin proteolipid protein family.

It localises to the cell membrane. This is the major myelin protein from the central nervous system. It plays an important role in the formation or maintenance of the multilamellar structure of myelin. This is Myelin proteolipid protein B (plp1-b) from Xenopus laevis (African clawed frog).